We begin with the raw amino-acid sequence, 198 residues long: Probable thymidylate kinase (198 aa).

G7 to S14 is a binding site for ATP.

It belongs to the thymidylate kinase family.

It carries out the reaction dTMP + ATP = dTDP + ADP. In Methanocorpusculum labreanum (strain ATCC 43576 / DSM 4855 / Z), this protein is Probable thymidylate kinase.